A 585-amino-acid chain; its full sequence is Glutamine--tRNA ligase (585 aa).

A 'HIGH' region motif is present at residues 51-61 (PEPNGYLHIGH). ATP is bound by residues 52–54 (EPN) and 58–64 (HIGHAKS). Residues Asp84 and Tyr238 each coordinate L-glutamine. ATP contacts are provided by residues Thr257 and 292–293 (RL). The 'KMSKS' region signature appears at 299–303 (ITSKR).

It belongs to the class-I aminoacyl-tRNA synthetase family. Monomer.

The protein resides in the cytoplasm. It carries out the reaction tRNA(Gln) + L-glutamine + ATP = L-glutaminyl-tRNA(Gln) + AMP + diphosphate. The chain is Glutamine--tRNA ligase from Cupriavidus necator (strain ATCC 17699 / DSM 428 / KCTC 22496 / NCIMB 10442 / H16 / Stanier 337) (Ralstonia eutropha).